Here is a 699-residue protein sequence, read N- to C-terminus: Tectonic-like complex member Mks1 (699 aa).

Disordered stretches follow at residues 101–121 (RRSP…EGEI) and 373–396 (DGFS…IEED). The segment covering 108 to 119 (HEGEMEKDKNEG) has biased composition (basic and acidic residues). Residues 434-560 (KRVSLLLELQ…RLQCIRPLGN (127 aa)) form the C2 B9-type domain. The disordered stretch occupies residues 632 to 661 (LELGNDSSDDGDSNDDDVRSSSNPDTSRAT).

In terms of assembly, probable component of the tectonic-like complex (also named MKS complex), composed of B9d1, B9d2, Cc2d2a, Mks1 and tctn. In terms of tissue distribution, expressed in chordotonal neurons in the antennae (at protein level). Expressed in spermatids (at protein level).

It localises to the cytoplasm. The protein localises to the cytoskeleton. The protein resides in the cilium basal body. It is found in the microtubule organizing center. Its subcellular location is the centrosome. It localises to the centriole. Functionally, probable component of the tectonic-like complex (also named MKS complex), a complex localized at the transition zone of primary cilia. Required for ciliary structure and function. The chain is Tectonic-like complex member Mks1 from Drosophila melanogaster (Fruit fly).